Here is a 110-residue protein sequence, read N- to C-terminus: Circadian clock oscillator protein KaiB (110 aa).

It belongs to the KaiB family. In terms of assembly, the KaiABC complex composition changes during the circadian cycle to control KaiC phosphorylation. Complexes KaiC(6), KaiA(2-4):KaiC(6), KaiB(6):KaiC(6) and KaiC(6):KaiB(6):KaiA(12) are among the most important forms, many form cooperatively. Undergoes a major conformational rearrangment; in the free state forms homotetramers as a dimer of dimers. When bound to the CI domain of KaiC switches to a monomeric thioredoxin-fold (KaiB(fs)). KaiB(fs) binds CikA, leading it to dephosphorylate phospho-RpaA.

Functionally, key component of the KaiABC oscillator complex, which constitutes the main circadian regulator in cyanobacteria. Complex composition changes during the circadian cycle to control KaiC phosphorylation. KaiA stimulates KaiC autophosphorylation, while KaiB sequesters KaiA, leading to KaiC autodephosphorylation. Phospho-Ser-431 KaiC accumulation triggers binding of KaiB to form the KaiB(6):KaiC(6) complex, leading to changes in output regulators CikA and SasA. KaiB switches to a thioredoxin-like fold (KaiB(fs)) when bound to KaiC. KaiB(6):KaiC(6) formation exposes a site for KaiA binding that sequesters KaiA from KaiC, making the KaiC(6):KaiB(6):KaiA(12) complex that results in KaiC autodephosphorylation. In terms of biological role, a metamorphic protein which reversibly switches between an inactive tetrameric fold and a rare, thioredoxin-like monomeric fold (KaiB(fs)). KaiB(fs) binds phospho-KaiC, KaiA and CikA. KaiA and CikA compete for binding to KaiB(fs), and KaiB(fs) and SasA compete for binding to KaiC, thus the clock oscillator and output signal pathway are tightly coupled. The sequence is that of Circadian clock oscillator protein KaiB from Synechococcus sp. (strain RCC307).